The sequence spans 368 residues: Geranylgeranyl pyrophosphate synthase dpfgD (368 aa).

Isopentenyl diphosphate is bound by residues Lys-48, Arg-51, and His-80. Residues Asp-87 and Asp-91 each contribute to the Mg(2+) site. A dimethylallyl diphosphate-binding site is contributed by Arg-96. Arg-97 lines the isopentenyl diphosphate pocket. Lys-174, Thr-175, and Gln-208 together coordinate dimethylallyl diphosphate. Mg(2+) is bound at residue Asp-211. Asn-215, Lys-225, and Lys-235 together coordinate dimethylallyl diphosphate.

The protein belongs to the FPP/GGPP synthase family. It depends on Mg(2+) as a cofactor.

The enzyme catalyses isopentenyl diphosphate + dimethylallyl diphosphate = (2E)-geranyl diphosphate + diphosphate. It carries out the reaction isopentenyl diphosphate + (2E)-geranyl diphosphate = (2E,6E)-farnesyl diphosphate + diphosphate. It catalyses the reaction isopentenyl diphosphate + (2E,6E)-farnesyl diphosphate = (2E,6E,10E)-geranylgeranyl diphosphate + diphosphate. It participates in secondary metabolite biosynthesis; terpenoid biosynthesis. Its function is as follows. Geranylgeranyl pyrophosphate synthase; part of the gene cluster that mediates the biosynthesis of diterpenoid pyrones. The first step of the pathway is the synthesis of the alpha-pyrone moiety by the polyketide synthase dpfgA via condensation of one acetyl-CoA starter unit with 3 malonyl-CoA units and 2 methylations. The alpha-pyrone is then combined with geranylgeranyl pyrophosphate (GGPP) formed by the GGPP synthase dpfgD through the action of the prenyltransferase dpfgC to yield a linear alpha-pyrone diterpenoid. Subsequent steps in the diterpenoid pyrone biosynthetic pathway involve the decalin core formation, which is initiated by the epoxidation of the C10-C11 olefin by the FAD-dependent oxidoreductase dpfgE, and is followed by a cyclization cascade catalyzed by the terpene cyclase dpfgB. The short chain dehydrogenase/reductase dpfgG then oxidizes the 8S hydroxy group to a ketone and the short chain dehydrogenase/reductase dpfgH reduces the ketone to the 8R hydroxy group to yield higginsianin B. Higginsianin B is further methylated by the methyltransferase dpfgI to produce the intermediate named FDDP B. The cytochrome P450 monooxygenase dfgpJ then catalyzes a three-step oxidation at C-27 to generate a carboxylic acid as well as C-26 hydroxylation. Finally, methyltransferase dpfgK methylates the carboxylic acid generated by dpfgJ, yielding the final diterpenoid pyrones from the pathway which were named FDDP D and FDDP E. The protein is Geranylgeranyl pyrophosphate synthase dpfgD of Gibberella zeae (strain ATCC MYA-4620 / CBS 123657 / FGSC 9075 / NRRL 31084 / PH-1) (Wheat head blight fungus).